The chain runs to 507 residues: MALKLMIQGTASSVGKSLLVAAFCRIFKQDGYRVAPFKSQNMALNSYITDEGLEIGRAQAMQAEAAGVKPSYHMNPILLKPSSDKKSQVVLRGKVYKNMSAAEYHQFKPQLLKFIKEDFDFLASQNDIVVIEGAGSPAEINLRDRDVVNMGMAEMVNAPVLLVGDIDKGGVFASIAGTLLLLKENERNRIEGVLINKFRGDIEILKPGLEMLENIVHKKVLGVVPYMDVHIDEEDGATERFYRRSTEGDIEIAVINLPHISNFTDFEPLAKVPGVKLRYVNKGERIGDCDVVIIPGTKNTIGDLQALKGYRLDKEIFEMRKKGKFIVGICGGYQILGKVIKDPGRIESTTSEIEGLGLLDVETVIENEKTTTQIKAVIRNNLPSILSPLRNIAVEGYEIHMGKSRILGDCQPFSVITHRNGEKIEVYDGCISDDGKVFGTYIHGIFENREFVREFINIVRKSKGLSPIEEIIDYKEFKEREYDKLADIVRKSIDMKKVYEIMERYKD.

Residues 249–451 form the GATase cobBQ-type domain; that stretch reads DIEIAVINLP…IHGIFENREF (203 aa). The active-site Nucleophile is the Cys-330. The active site involves His-443.

Belongs to the CobB/CobQ family. CobQ subfamily.

It functions in the pathway cofactor biosynthesis; adenosylcobalamin biosynthesis. Catalyzes amidations at positions B, D, E, and G on adenosylcobyrinic A,C-diamide. NH(2) groups are provided by glutamine, and one molecule of ATP is hydrogenolyzed for each amidation. This is Cobyric acid synthase from Thermoanaerobacter sp. (strain X514).